The following is a 467-amino-acid chain: MDYFEGGERLNLMQVLDNREWREKYQKQLMASFPTAVITSVKLNLPGPIKTSPKLQSVFQIIINDLNPVFKDLQIIKEASFVDQITGPDIFFVTSGCLKLVKQIMITFEESHLLGRLLDLDVMCQNADKQLSREELGFAPRKCLLCGKDAKTCIKEGNHSLAEGYSQINKMLHNFEKSKMIVPQMTQSQVVNAALTGMLYEVSLAPKPGLVDPSSNGAHKDMTVFTFIDSSLALQPYLNEAYRIGNQFKGTDLPRMFSLLRNAGIRAEKDMFAATNGVNTHKGAVFSLGIMVTAVAYATQKGITNLLTIQKVISDMTQDLVKNDLGKNNLRHSQNQQTAGERQFIKYKIPGVRGEAEKGFPIVMNLALPFLCEQQGNLNQRLLNTLMKIAGNIDDTNLIKRAGNATISKDMQHWSVTFFQIGGSYTPEGLKFLNDLDQMFIKRNLSMGGAADNLILTIFLARLVGSL.

Residues 1 to 178 (MDYFEGGERL…NKMLHNFEKS (178 aa)) form an apo-citrate lyase phosphoribosyl-dephospho-CoA transferase region. Positions 179–467 (KMIVPQMTQS…IFLARLVGSL (289 aa)) are 2-(5''-triphosphoribosyl)-3'-dephosphocoenzyme-A synthase.

The protein in the N-terminal section; belongs to the CitX family. This sequence in the C-terminal section; belongs to the CitG/MdcB family.

The catalysed reaction is apo-[citrate lyase ACP] + 2'-(5''-triphospho-alpha-D-ribosyl)-3'-dephospho-CoA = holo-[citrate lyase ACP] + diphosphate. It catalyses the reaction 3'-dephospho-CoA + ATP = 2'-(5''-triphospho-alpha-D-ribosyl)-3'-dephospho-CoA + adenine. Functionally, bifunctional enzyme that catalyzes formation of 2-(5''-triphosphoribosyl)-3'-dephosphocoenzyme-A, and then the transfer of this prosthetic group precursor to the apo-acyl carrier protein (gamma chain) of the citrate lyase to yield the holo-acyl carrier protein. The sequence is that of Protein CitXG (citXG) from Leuconostoc mesenteroides subsp. cremoris.